The following is a 314-amino-acid chain: MKKNPKISLIGSGNIGGTLAHLISLKKLGDIVLFDVSEGLPQGKALDLMQAATIEGSDIKIKGTNDYRDIEGSDAVIITAGLPRKPGMSRDDLISVNTKIMKDVAQNIKKYAQNAFVIVITNPLDIMVYVMLKESGLPHNKVIGMAGVLDSSRFNLFLAKEFKVSVKNVNSIVLGGHGDTMVPLLRYSTISGVPIPDLIKMGLSSNKNIEKIIDRTKNGGGEIVKLLKTGSAYYAPAASAIAMLESYLKDKRQILTCAAYLQGEYDIHDLYIGVPIIIGKEGVIKVIELQLTEEEKILFYKSVTEVKKLIDTIQ.

NAD(+) is bound by residues 11–16 (GSGNIG) and aspartate 35. 2 residues coordinate substrate: arginine 84 and arginine 90. NAD(+)-binding positions include asparagine 97 and 120–122 (ITN). Asparagine 122 and arginine 153 together coordinate substrate. The Proton acceptor role is filled by histidine 177.

The protein belongs to the LDH/MDH superfamily. MDH type 3 family.

It catalyses the reaction (S)-malate + NAD(+) = oxaloacetate + NADH + H(+). In terms of biological role, catalyzes the reversible oxidation of malate to oxaloacetate. The protein is Malate dehydrogenase of Rickettsia prowazekii (strain Madrid E).